The sequence spans 690 residues: MAKKKSEEHSSADANDSDYQEEPNFDDPPNFVDNINDEDLLGDMLAQRPSEADGVESVVVVDNIPKVEPSRLEKLKSVILKVFSHCGEIVNVVYPVDDEGTTKGYAFMEYRHASQAEDAVKKLNNHRLDKNHTFAVNLFTDFQKYENIPEKWEPPTVQPFKIQNDLYNFINDPDAYDQYCVAAETAPNCVQVGFWQNTLPEPNELETRERFTDTFVKWSPLGTYVVTFHKPGVAIWGGSNFQKIQKFPHTGTQFVEFSPCENYLVTYGPTPTGQKIIIWDIRTGSEKRSFVADGMSVLSMFRWSHDDKFVARMGENSIHIYETPSFYLLDLKSIKIPGIRGFSWSPTDNVIAYWVEEQNQIPARVTLMEIPKKREIRNKNLFHVADCKLHWQKSGDYLCVKVDRYSKLKKDKKELDVKFLGMFYNFEIFHMREKEIPVDSVEIRELILAFAWEPIGNKFSIIHGELNSSNVSFYEVNKGVKPSLVKRLEKKSCTHLFWSPRGQFIVMANLTMGTFEFVDTTNDYIISASPDHFRASEVEWDPTGRYVVTGVSSWKVKEDTGFNMYTFQGRIIKRTILKNFVQFLWRPRPPTLLSEEKQKDIKKNLKKYYPAFEQKDRLRLTRASKELLEKRSQLRETFMEYRNKRIAEWKDQKSRRVMLRGHVDTDNLETEEVDEEIVEFLVKEEITLLE.

Positions 1–11 (MAKKKSEEHSS) are enriched in basic and acidic residues. Residues 1 to 33 (MAKKKSEEHSSADANDSDYQEEPNFDDPPNFVD) are disordered. Residues 15-25 (NDSDYQEEPNF) are compositionally biased toward acidic residues. In terms of domain architecture, RRM spans 57–141 (SVVVVDNIPK…HTFAVNLFTD (85 aa)). WD repeat units lie at residues 207–246 (TRERFTDTFVKWSPLGTYVVTFHKPGVAIWGGSNFQKIQK), 293–331 (DGMSVLSMFRWSHDDKFVARMGENSIHIYETPSFYLLDL), 334–369 (IKIPGIRGFSWSPTDNVIAYWVEEQNQIPARVTLME), 442–484 (EIRE…KPSL), and 530–575 (PDHF…IKRT). The stretch at 614-645 (QKDRLRLTRASKELLEKRSQLRETFMEYRNKR) forms a coiled coil.

The protein belongs to the eIF-3 subunit B family. Component of the eukaryotic translation initiation factor 3 (eIF-3) complex. The eIF-3 complex interacts with pix. Interacts with mxt.

The protein resides in the cytoplasm. RNA-binding component of the eukaryotic translation initiation factor 3 (eIF-3) complex, which is involved in protein synthesis of a specialized repertoire of mRNAs and, together with other initiation factors, stimulates binding of mRNA and methionyl-tRNAi to the 40S ribosome. The eIF-3 complex specifically targets and initiates translation of a subset of mRNAs involved in cell proliferation. In Drosophila willistoni (Fruit fly), this protein is Eukaryotic translation initiation factor 3 subunit B.